The primary structure comprises 95 residues: Protein TusB (95 aa).

The protein belongs to the DsrH/TusB family. As to quaternary structure, heterohexamer, formed by a dimer of trimers. The hexameric TusBCD complex contains 2 copies each of TusB, TusC and TusD. The TusBCD complex interacts with TusE.

Its subcellular location is the cytoplasm. Part of a sulfur-relay system required for 2-thiolation of 5-methylaminomethyl-2-thiouridine (mnm(5)s(2)U) at tRNA wobble positions. The protein is Protein TusB of Salmonella dublin (strain CT_02021853).